Consider the following 259-residue polypeptide: Factor V activator (259 aa).

The first 18 residues, 1–18, serve as a signal peptide directing secretion; sequence MVLIRVLANLLVLQLSYA. Positions 19 to 24 are excised as a propeptide; that stretch reads QKSSEL. The region spanning 25–251 is the Peptidase S1 domain; the sequence is VVGGDECDIN…YTDWIQSIIA (227 aa). 6 disulfides stabilise this stretch: cysteine 31/cysteine 165, cysteine 52/cysteine 68, cysteine 100/cysteine 258, cysteine 144/cysteine 212, cysteine 176/cysteine 191, and cysteine 202/cysteine 227. Active-site charge relay system residues include histidine 67 and aspartate 112. The Charge relay system role is filled by serine 206. N-linked (GlcNAc...) asparagine glycosylation is present at asparagine 253.

The protein belongs to the peptidase S1 family. Snake venom subfamily. Monomer. Post-translationally, N-glycosylated. Contains 4.4% of hexoses, 4.4% of hexosamines and 3.1% of sialic acids. In terms of tissue distribution, expressed by the venom gland.

The protein localises to the secreted. The enzyme catalyses Fully activates human clotting factor V by a single cleavage at the 1545-Trp-Tyr-Leu-Arg-|-Ser-Asn-Asn-Gly-1552 bond. Cattle, but not rabbit, factor V is cleaved, and no other proteins of the clotting system are attacked. Esterase activity is observed on Bz-Arg-OEt and Tos-Arg-OMe, and amidase activity on Phe-pipecolyl-Arg-NHPhNO2.. Its activity is regulated as follows. Inhibited by D-Phe-Pro-Arg-chloromethyl ketone (FPRCK) (98%), PMSF (93%), benzamidine (67%), and diisopropylfluorophosphate (DFP). Is not inhibited by BPTI, antithrombin and EDTA. In terms of biological role, venom serine protease that converts factor V (F5) to the active form Va in the presence of calcium ions and phospholipids. It cleaves the Arg(1545)-Ser(1546) linkage in the human factor V molecule. Has hydrolytic activities against BAEE (1.2 U/mg), TAME, and Pro-Phe-Arg-MCA (4.9 U/mg). Shows coagulant activity. In Macrovipera lebetinus (Levantine viper), this protein is Factor V activator.